The chain runs to 329 residues: UPF0421 protein SH1063 (329 aa).

5 helical membrane-spanning segments follow: residues 25–45, 60–80, 87–107, 108–128, and 131–151; these read LFCL…IVTI, LPAT…FGDP, FSAL…GTTV, AVLT…FNFF, and LLTA…VLPP.

Belongs to the UPF0421 family.

Its subcellular location is the cell membrane. This chain is UPF0421 protein SH1063, found in Staphylococcus haemolyticus (strain JCSC1435).